Consider the following 500-residue polypeptide: E3 ubiquitin-protein ligase TRIM69 (500 aa).

The segment at 1-152 (MEVSTNPSSN…SVGQSKEFLQ (152 aa)) is necessary for nuclear localization. Residues 41-82 (CPLCNDWFRDPLMLSCGHNFCEACIQDFWRLQAKETFCPECK) form an RING-type zinc finger. Residues 161–255 (TEELAIQQGQ…QCLLAKDMLV (95 aa)) are a coiled coil. The B30.2/SPRY domain maps to 305–500 (PIQYMVWREM…KEPLHILHPQ (196 aa)). Residue Ser-341 is modified to Phosphoserine.

Belongs to the TRIM/RBCC family. Homo-multimer; required for antiviral activity. Interacts with PML. Phosphorylated. Phosphorylation is necessary for nuclear localization.

Its subcellular location is the cytoplasm. It localises to the nucleus. It is found in the nucleus speckle. The protein localises to the cytoskeleton. The protein resides in the microtubule organizing center. Its subcellular location is the centrosome. The enzyme catalyses S-ubiquitinyl-[E2 ubiquitin-conjugating enzyme]-L-cysteine + [acceptor protein]-L-lysine = [E2 ubiquitin-conjugating enzyme]-L-cysteine + N(6)-ubiquitinyl-[acceptor protein]-L-lysine.. The protein operates within protein modification; protein ubiquitination. In terms of biological role, E3 ubiquitin ligase that plays an important role in antiviral immunity by restricting different viral infections including dengue virus or vesicular stomatitis indiana virus. Ubiquitinates viral proteins such as dengue virus NS3 thereby limiting infection. In addition, acts as a key mediator of type I interferon induced microtubule stabilization by directly associating to microtubules independently of its E3 ligase activity. Also plays a role in cataract formation together with TP53. Mechanistically, inhibits UVB-induced cell apoptosis and reactive oxygen species (ROS) production by inducing TP53 ubiquitination. Regulates centrosome dynamics and mitotic progression by ubiquitinating STK3/MST2; leading to its redistribution to the perinuclear cytoskeleton and subsequent phosphorylation by PLK1. The chain is E3 ubiquitin-protein ligase TRIM69 (TRIM69) from Homo sapiens (Human).